The primary structure comprises 153 residues: NADH dehydrogenase [ubiquinone] 1 beta subcomplex subunit 11, mitochondrial (153 aa).

The transit peptide at 1–29 (MAAGLFGLSARLLLAAAATRGLPAARVRW) directs the protein to the mitochondrion. The segment at 40 to 77 (PSAVAGKRPPEPTTQWQEDPEPEDENLYEKNPDSHGYD) is disordered. Residues 66-77 (LYEKNPDSHGYD) are compositionally biased toward basic and acidic residues. The chain crosses the membrane as a helical span at residues 89–109 (LVFFFGVSIILVLGSTFVAYL).

Belongs to the complex I NDUFB11 subunit family. In terms of assembly, complex I is composed of 45 different subunits. Interacts with BCAP31.

Its subcellular location is the mitochondrion inner membrane. Accessory subunit of the mitochondrial membrane respiratory chain NADH dehydrogenase (Complex I), that is believed not to be involved in catalysis. Complex I functions in the transfer of electrons from NADH to the respiratory chain. The immediate electron acceptor for the enzyme is believed to be ubiquinone. The protein is NADH dehydrogenase [ubiquinone] 1 beta subcomplex subunit 11, mitochondrial (NDUFB11) of Pan troglodytes (Chimpanzee).